A 257-amino-acid chain; its full sequence is Major prion protein (257 aa).

The signal sequence occupies residues 1 to 24 (MVKSHIGGWILVLFVAAWSDIGLC). An interaction with GRB2, ERI3 and SYN1 region spans residues 25–234 (KKRPKPGGGW…EYEAYAQRGA (210 aa)). The interval 28-113 (PKPGGGWNTG…NKPSKPKTNM (86 aa)) is disordered. 5 consecutive repeat copies span residues 54 to 62 (PQGGGGWGQ), 63 to 70 (PHGGGWGQ), 71 to 78 (PHGGGWGQ), 79 to 86 (PHGGGWGQ), and 87 to 95 (PHGGGGWGQ). The interval 54–95 (PQGGGGWGQPHGGGWGQPHGGGWGQPHGGGWGQPHGGGGWGQ) is 5 X 8 AA tandem repeats of P-H-G-G-G-W-G-Q. Over residues 55 to 100 (QGGGGWGQPHGGGWGQPHGGGWGQPHGGGWGQPHGGGGWGQGGGSH) the composition is skewed to gly residues. Cu(2+)-binding residues include His-64, Gly-65, Gly-66, His-72, Gly-73, Gly-74, His-80, Gly-81, Gly-82, His-88, Gly-90, and Gly-91. Cys-183 and Cys-218 are oxidised to a cystine. Asn-185 and Asn-201 each carry an N-linked (GlcNAc...) asparagine glycan. A lipid anchor (GPI-anchor amidated alanine) is attached at Ala-234. The propeptide at 235 to 257 (SVILFSSPPVILLISFLLFLIVG) is removed in mature form.

Belongs to the prion family. In terms of assembly, monomer and homodimer. Has a tendency to aggregate into amyloid fibrils containing a cross-beta spine, formed by a steric zipper of superposed beta-strands. Soluble oligomers may represent an intermediate stage on the path to fibril formation. Copper binding may promote oligomerization. Interacts with GRB2, APP, ERI3/PRNPIP and SYN1. Mislocalized cytosolically exposed PrP interacts with MGRN1; this interaction alters MGRN1 subcellular location and causes lysosomal enlargement. Interacts with KIAA1191.

It localises to the cell membrane. The protein resides in the golgi apparatus. In terms of biological role, its primary physiological function is unclear. Has cytoprotective activity against internal or environmental stresses. May play a role in neuronal development and synaptic plasticity. May be required for neuronal myelin sheath maintenance. May play a role in iron uptake and iron homeostasis. Soluble oligomers are toxic to cultured neuroblastoma cells and induce apoptosis (in vitro). Association with GPC1 (via its heparan sulfate chains) targets PRNP to lipid rafts. Also provides Cu(2+) or Zn(2+) for the ascorbate-mediated GPC1 deaminase degradation of its heparan sulfate side chains. This is Major prion protein (PRNP) from Sus scrofa (Pig).